The primary structure comprises 152 residues: Large ribosomal subunit protein eL29 (152 aa).

The span at 1–26 shows a compositional bias: basic residues; sequence MAKSKNHTTHNQSRKWHRNGIKKPRS. The interval 1 to 32 is disordered; that stretch reads MAKSKNHTTHNQSRKWHRNGIKKPRSQRYESL. Lysine 5 bears the N6-methyllysine mark. Residue serine 31 is modified to Phosphoserine. Lysine 33 is subject to N6-acetyllysine. The tract at residues 119-152 is disordered; sequence CRPKSQAKASTKAKPPAAAAPAAKGAQAPTKAPE. The span at 121–152 shows a compositional bias: low complexity; the sequence is PKSQAKASTKAKPPAAAAPAAKGAQAPTKAPE.

This sequence belongs to the eukaryotic ribosomal protein eL29 family. Component of the large ribosomal subunit.

It is found in the cytoplasm. Component of the large ribosomal subunit. The ribosome is a large ribonucleoprotein complex responsible for the synthesis of proteins in the cell. This chain is Large ribosomal subunit protein eL29 (RPL29), found in Bos taurus (Bovine).